A 382-amino-acid polypeptide reads, in one-letter code: DnaJ homolog dnj-20 (382 aa).

An N-terminal signal peptide occupies residues 1–21; it reads MRILNVSLLVLTAFLVDFVEC. A J domain is found at 24-89; sequence DFYKILGVSK…EKRAMYDRHG (66 aa).

This chain is DnaJ homolog dnj-20, found in Caenorhabditis briggsae.